Consider the following 148-residue polypeptide: UPF0756 membrane protein NGK_2061 (148 aa).

4 consecutive transmembrane segments (helical) span residues Leu10 to Leu32, His50 to Gly70, Met85 to Leu105, and Leu116 to Ile136.

It belongs to the UPF0756 family.

Its subcellular location is the cell membrane. This chain is UPF0756 membrane protein NGK_2061, found in Neisseria gonorrhoeae (strain NCCP11945).